The chain runs to 212 residues: Cytidylate kinase (212 aa).

Residue 7 to 15 participates in ATP binding; it reads GPAASGKGT.

The protein belongs to the cytidylate kinase family. Type 1 subfamily.

It is found in the cytoplasm. The enzyme catalyses CMP + ATP = CDP + ADP. It carries out the reaction dCMP + ATP = dCDP + ADP. The polypeptide is Cytidylate kinase (Rhodopseudomonas palustris (strain ATCC BAA-98 / CGA009)).